A 126-amino-acid polypeptide reads, in one-letter code: Fluoride-specific ion channel FluC (126 aa).

Helical transmembrane passes span 7 to 24 (LWVSLGGIVGACARYFLS), 35 to 55 (FPWGTLLINITGSFVLGLFLV), 69 to 89 (LLIAIGFCGAYTTFSSYAYES), and 98 to 118 (WGLFAGNVLANNILCLAAVLG). Na(+)-binding residues include glycine 77 and threonine 80.

Belongs to the fluoride channel Fluc/FEX (TC 1.A.43) family.

Its subcellular location is the cell inner membrane. It carries out the reaction fluoride(in) = fluoride(out). Na(+) is not transported, but it plays an essential structural role and its presence is essential for fluoride channel function. In terms of biological role, fluoride-specific ion channel. Important for reducing fluoride concentration in the cell, thus reducing its toxicity. This is Fluoride-specific ion channel FluC from Koribacter versatilis (strain Ellin345).